The sequence spans 511 residues: Cytochrome P450 4B1 (511 aa).

2 residues coordinate heme: Glu315 and Cys453.

This sequence belongs to the cytochrome P450 family. It depends on heme as a cofactor.

The protein localises to the endoplasmic reticulum membrane. It localises to the microsome membrane. It carries out the reaction an organic molecule + reduced [NADPH--hemoprotein reductase] + O2 = an alcohol + oxidized [NADPH--hemoprotein reductase] + H2O + H(+). Functionally, cytochromes P450 are a group of heme-thiolate monooxygenases. In liver microsomes, this enzyme is involved in an NADPH-dependent electron transport pathway. It oxidizes a variety of structurally unrelated compounds, including steroids, fatty acids, and xenobiotics. This chain is Cytochrome P450 4B1 (Cyp4b1), found in Rattus norvegicus (Rat).